The following is a 357-amino-acid chain: Probable cinnamyl alcohol dehydrogenase 2 (357 aa).

Cys47 contributes to the Zn(2+) binding site. An NADP(+)-binding site is contributed by Ser49. The Zn(2+) site is built by His69, Glu70, Cys100, Cys103, Cys106, Cys114, and Cys163. NADP(+) contacts are provided by residues Thr167, 188-193, 211-216, Thr251, Gly275, and 298-300; these read GLGGVG, SSSNKK, and SFI.

It belongs to the zinc-containing alcohol dehydrogenase family. In terms of assembly, homodimer. The cofactor is Zn(2+). Post-translationally, the N-terminus is blocked.

The enzyme catalyses (E)-cinnamyl alcohol + NADP(+) = (E)-cinnamaldehyde + NADPH + H(+). It catalyses the reaction (E)-coniferol + NADP(+) = (E)-coniferaldehyde + NADPH + H(+). It carries out the reaction (E)-sinapyl alcohol + NADP(+) = (E)-sinapaldehyde + NADPH + H(+). The catalysed reaction is (E)-4-coumaroyl alcohol + NADP(+) = (E)-4-coumaraldehyde + NADPH + H(+). The enzyme catalyses (E)-caffeyl alcohol + NADP(+) = (E)-caffeyl aldehyde + NADPH + H(+). Its pathway is aromatic compound metabolism; phenylpropanoid biosynthesis. Functionally, involved in lignin biosynthesis. Catalyzes the final step specific for the production of lignin monomers. Catalyzes the NADPH-dependent reduction of coniferaldehyde, 5-hydroxyconiferaldehyde, sinapaldehyde, 4-coumaraldehyde and caffeyl aldehyde to their respective alcohols. In Nicotiana tabacum (Common tobacco), this protein is Probable cinnamyl alcohol dehydrogenase 2 (CAD19).